Reading from the N-terminus, the 129-residue chain is MAFGWHSMHGSIIWFLQIAQLSTAISHDQNATAVHFLISNLFFLVSTGALWFELCAIFCDSSSSTSILSTSLLMLNYFSLKFSATGERHLVATNIAHIEAHTSIVGFMISLFTPLKETIITKYEMLVRT.

The N-terminal stretch at 1–24 (MAFGWHSMHGSIIWFLQIAQLSTA) is a signal peptide. The next 2 membrane-spanning stretches (helical) occupy residues 38–58 (ISNL…CAIF) and 95–115 (IAHI…FTPL).

It is found in the membrane. This is an uncharacterized protein from Saccharomyces cerevisiae (strain ATCC 204508 / S288c) (Baker's yeast).